The primary structure comprises 796 residues: ER degradation-enhancing alpha-mannosidase-like protein 1 (796 aa).

An N-terminal signal peptide occupies residues 1–20 (MVCCLWVLLALLLHLDHVAC). Asparagine 86 carries N-linked (GlcNAc...) asparagine glycosylation. Glutamate 372 serves as the catalytic Proton donor. Threonine 495 lines the Ca(2+) pocket. Asparagine 517, asparagine 672, and asparagine 762 each carry an N-linked (GlcNAc...) asparagine glycan.

It belongs to the glycosyl hydrolase 47 family. As to quaternary structure, interacts with PDI1. Ca(2+) serves as cofactor.

It localises to the endoplasmic reticulum lumen. The catalysed reaction is Hydrolysis of terminal, non-reducing alpha-D-mannose residues in alpha-D-mannosides.. Its pathway is protein modification; protein glycosylation. Alpha-1,2-specific exomannosidase involved in endoplasmic reticulum-associated degradation (ERAD). Delivers misfolded glycoproteins to proteasomes. Forms a complex with PDI1 to process unfolded protein-bound Man8GlcNAc2 oligosaccharides to Man7GlcNAc2, promoting degradation in unfolded protein response. In Saccharomyces cerevisiae (strain ATCC 204508 / S288c) (Baker's yeast), this protein is ER degradation-enhancing alpha-mannosidase-like protein 1 (MNL1).